The primary structure comprises 817 residues: Putative ATP-dependent RNA helicase R350 (817 aa).

The disordered stretch occupies residues 1–29; the sequence is MNRRNRSNDLNPEPSIENPNNQIAEEFPG. Residues 17–29 are compositionally biased toward polar residues; sequence ENPNNQIAEEFPG. Residues 93–271 form the Helicase ATP-binding domain; sequence LNPQGPYTSI…ALMFNLLRPG (179 aa). 106–113 contacts ATP; sequence HGLGSGKT. The short motif at 206-209 is the DEAH box element; it reads DEAH. One can recognise a Helicase C-terminal domain in the interval 495–661; sequence LAIAFMTYIS…STDEYVEDQA (167 aa).

It belongs to the DEAD box helicase family. DEAH subfamily.

The protein resides in the virion. It catalyses the reaction ATP + H2O = ADP + phosphate + H(+). The protein is Putative ATP-dependent RNA helicase R350 of Acanthamoeba polyphaga mimivirus (APMV).